The sequence spans 703 residues: Protein STRUBBELIG-RECEPTOR FAMILY 8 (703 aa).

Positions 1 to 27 are cleaved as a signal peptide; sequence MAIGDRAMFTVLLLFIASISGFSVVRC. Topologically, residues 28 to 291 are extracellular; sequence VTDPSDVQAL…GKGLSGGVVT (264 aa). LRR repeat units follow at residues 96–120, 122–142, 143–165, 166–190, 192–212, 213–233, and 234–256; these read LKSLRKLDVSGNSIHDTLPYQLPPN, TSLNLARNNLSGNLPYSISAM, GSLSYMNVSGNSLTMSIGDIFAD, HKSLATLDLSHNNFSGDLPSSLSTV, TLSVLYVQNNQLTGSIDVLSG, LPLKTLNVANNHFNGSIPKEL, and SSIQTLIYDGNSFDNVPASPQPE. N-linked (GlcNAc...) asparagine glycosylation is found at Asn-120, Asn-130, Asn-149, and Asn-178. An N-linked (GlcNAc...) asparagine glycan is attached at Asn-226. The tract at residues 247–284 is disordered; the sequence is DNVPASPQPERPGKKETPSGSKKPKIGSEEKSSDSGKG. A helical membrane pass occupies residues 292 to 312; sequence GIVFGSLFVAGIIALVLYLCL. At 313-703 the chain is on the cytoplasmic side; sequence HKKKRKVRGS…PEHEHVDISF (391 aa). Residues 395–672 form the Protein kinase domain; sequence FSQENIIGEG…SEVVQQLVRL (278 aa). Residues 401–409 and Lys-423 each bind ATP; that span reads IGEGSLGRV.

It belongs to the protein kinase superfamily. Ser/Thr protein kinase family. Expressed in seedlings, roots, stems, leaves, flowers and siliques.

The protein localises to the membrane. This Arabidopsis thaliana (Mouse-ear cress) protein is Protein STRUBBELIG-RECEPTOR FAMILY 8 (SRF8).